A 262-amino-acid polypeptide reads, in one-letter code: Probable dihydroorotate dehydrogenase B (NAD(+)), electron transfer subunit (262 aa).

The FAD-binding FR-type domain occupies 4–97 (VKPIPAEVVE…RGPYGKPFEV (94 aa)). 4 residues coordinate [2Fe-2S] cluster: cysteine 217, cysteine 222, cysteine 225, and cysteine 234.

This sequence belongs to the PyrK family. Heterotetramer of 2 PyrK and 2 PyrD type B subunits. [2Fe-2S] cluster is required as a cofactor. FAD serves as cofactor.

The protein operates within pyrimidine metabolism; UMP biosynthesis via de novo pathway; orotate from (S)-dihydroorotate (NAD(+) route): step 1/1. Responsible for channeling the electrons from the oxidation of dihydroorotate from the FMN redox center in the PyrD type B subunit to the ultimate electron acceptor NAD(+). The polypeptide is Probable dihydroorotate dehydrogenase B (NAD(+)), electron transfer subunit (Methanopyrus kandleri (strain AV19 / DSM 6324 / JCM 9639 / NBRC 100938)).